The primary structure comprises 539 residues: Hydroxylamine reductase (539 aa).

4 residues coordinate [4Fe-4S] cluster: Cys-3, Cys-6, Cys-13, and Cys-19. Hybrid [4Fe-2O-2S] cluster contacts are provided by His-240, Glu-264, Cys-308, Cys-395, Cys-423, Cys-448, Glu-482, and Lys-484. Cys-395 is subject to Cysteine persulfide.

It belongs to the HCP family. [4Fe-4S] cluster serves as cofactor. The cofactor is hybrid [4Fe-2O-2S] cluster.

It is found in the cytoplasm. It catalyses the reaction A + NH4(+) + H2O = hydroxylamine + AH2 + H(+). Functionally, catalyzes the reduction of hydroxylamine to form NH(3) and H(2)O. This chain is Hydroxylamine reductase, found in Thermodesulfovibrio yellowstonii (strain ATCC 51303 / DSM 11347 / YP87).